The sequence spans 278 residues: Large ribosomal subunit protein uL2 (278 aa).

Positions 210-219 are enriched in basic residues; sequence RKRWLGKRPQ. The disordered stretch occupies residues 210-278; that stretch reads RKRWLGKRPQ…LIIRHRKGSK (69 aa). Basic and acidic residues predominate over residues 258-270; it reads KTRDVKKASEKLI.

It belongs to the universal ribosomal protein uL2 family. In terms of assembly, part of the 50S ribosomal subunit. Forms a bridge to the 30S subunit in the 70S ribosome.

Its function is as follows. One of the primary rRNA binding proteins. Required for association of the 30S and 50S subunits to form the 70S ribosome, for tRNA binding and peptide bond formation. It has been suggested to have peptidyltransferase activity; this is somewhat controversial. Makes several contacts with the 16S rRNA in the 70S ribosome. The chain is Large ribosomal subunit protein uL2 from Lactobacillus acidophilus (strain ATCC 700396 / NCK56 / N2 / NCFM).